A 468-amino-acid polypeptide reads, in one-letter code: Sorting and assembly machinery component 50 homolog A (468 aa).

A disordered region spans residues 1–24; the sequence is MGTVHARSLDPLPMNGPDFGSPDD. In terms of domain architecture, POTRA spans 44–124; sequence VVVQRVHFEG…LDVTFEVTEL (81 aa).

This sequence belongs to the SAM50/omp85 family. In terms of assembly, associates with the mitochondrial contact site and cristae organizing system (MICOS) complex (also known as MINOS or MitOS complex).

It is found in the mitochondrion outer membrane. Functionally, may play a role in the maintenance of the structure of mitochondrial cristae. This chain is Sorting and assembly machinery component 50 homolog A (samm50-a), found in Xenopus laevis (African clawed frog).